The primary structure comprises 161 residues: 2-C-methyl-D-erythritol 2,4-cyclodiphosphate synthase (161 aa).

Residues Asp11 and His13 each coordinate a divalent metal cation. 4-CDP-2-C-methyl-D-erythritol 2-phosphate contacts are provided by residues 11-13 and 37-38; these read DIH and HS. His45 is an a divalent metal cation binding site. 4-CDP-2-C-methyl-D-erythritol 2-phosphate-binding positions include 59-61, 135-138, and Arg145; these read DIG and TTNE.

Belongs to the IspF family. As to quaternary structure, homotrimer. It depends on a divalent metal cation as a cofactor.

It catalyses the reaction 4-CDP-2-C-methyl-D-erythritol 2-phosphate = 2-C-methyl-D-erythritol 2,4-cyclic diphosphate + CMP. It participates in isoprenoid biosynthesis; isopentenyl diphosphate biosynthesis via DXP pathway; isopentenyl diphosphate from 1-deoxy-D-xylulose 5-phosphate: step 4/6. Involved in the biosynthesis of isopentenyl diphosphate (IPP) and dimethylallyl diphosphate (DMAPP), two major building blocks of isoprenoid compounds. Catalyzes the conversion of 4-diphosphocytidyl-2-C-methyl-D-erythritol 2-phosphate (CDP-ME2P) to 2-C-methyl-D-erythritol 2,4-cyclodiphosphate (ME-CPP) with a corresponding release of cytidine 5-monophosphate (CMP). The protein is 2-C-methyl-D-erythritol 2,4-cyclodiphosphate synthase of Synechocystis sp. (strain ATCC 27184 / PCC 6803 / Kazusa).